The primary structure comprises 1145 residues: Cation channel sperm-associated auxiliary subunit gamma 2 (1145 aa).

Residues 1-38 (MVSRPAMSPVSPVWPRKPNLWAFWVLRLVLLLSLKSWA) form the signal peptide. The Extracellular portion of the chain corresponds to 39–1061 (EDALQHCTWL…IHGLPLSSKR (1023 aa)). Cystine bridges form between Cys-45/Cys-106 and Cys-160/Cys-166. The N-linked (GlcNAc...) asparagine glycan is linked to Asn-103. An N-linked (GlcNAc...) asparagine glycan is attached at Asn-178. The cysteines at positions 289 and 344 are disulfide-linked. Residues Asn-356, Asn-402, Asn-672, and Asn-743 are each glycosylated (N-linked (GlcNAc...) asparagine). Disulfide bonds link Cys-395/Cys-403, Cys-634/Cys-856, Cys-802/Cys-830, Cys-878/Cys-1042, Cys-905/Cys-914, and Cys-1006/Cys-1012. N-linked (GlcNAc...) asparagine glycosylation is present at Asn-1038. Residues 1062-1083 (TSFIVMVSTSFFIALVVFYILF) form a helical membrane-spanning segment. Residues 1084-1145 (CLVWPHIVKA…KEDNVQAKTA (62 aa)) are Cytoplasmic-facing.

Belongs to the CATSPERG family. As to quaternary structure, component of the CatSper complex or CatSpermasome composed of the core pore-forming members CATSPER1, CATSPER2, CATSPER3 and CATSPER4 as well as auxiliary members CATSPERB, CATSPERG2, CATSPERD, CATSPERE, CATSPERZ, C2CD6/CATSPERT, SLCO6C1, TMEM249, TMEM262 and EFCAB9. HSPA1 may be an additional auxiliary complex member. The core complex members CATSPER1, CATSPER2, CATSPER3 and CATSPER4 form a heterotetrameric channel. The auxiliary CATSPERB, CATSPERG2, CATSPERD and CATSPERE subunits form a pavilion-like structure over the pore which stabilizes the complex through interactions with CATSPER4, CATSPER3, CATSPER1 and CATSPER2 respectively. SLCO6C1 interacts with CATSPERE and TMEM262/CATSPERH interacts with CATSPERB, further stabilizing the complex. C2CD6/CATSPERT interacts at least with CATSPERD and is required for targeting the CatSper complex in the flagellar membrane. In terms of tissue distribution, testis-specific. Specifically expressed in the principal piece of the sperm tail (at protein level). Expressed in spermatocytes and spermatids within the seminiferous tubule but not in interstitial cells.

The protein localises to the cell projection. It localises to the cilium. Its subcellular location is the flagellum membrane. Functionally, auxiliary component of the CatSper complex, a complex involved in sperm cell hyperactivation. Sperm cell hyperactivation is needed for sperm motility which is essential late in the preparation of sperm for fertilization. This chain is Cation channel sperm-associated auxiliary subunit gamma 2, found in Mus musculus (Mouse).